A 375-amino-acid polypeptide reads, in one-letter code: Succinyl-diaminopimelate desuccinylase (375 aa).

His-66 lines the Zn(2+) pocket. Asp-68 is a catalytic residue. Residue Asp-99 participates in Zn(2+) binding. Catalysis depends on Glu-130, which acts as the Proton acceptor. Residues Glu-131, Glu-159, and His-345 each contribute to the Zn(2+) site.

It belongs to the peptidase M20A family. DapE subfamily. Homodimer. Zn(2+) is required as a cofactor. It depends on Co(2+) as a cofactor.

The enzyme catalyses N-succinyl-(2S,6S)-2,6-diaminopimelate + H2O = (2S,6S)-2,6-diaminopimelate + succinate. Its pathway is amino-acid biosynthesis; L-lysine biosynthesis via DAP pathway; LL-2,6-diaminopimelate from (S)-tetrahydrodipicolinate (succinylase route): step 3/3. Functionally, catalyzes the hydrolysis of N-succinyl-L,L-diaminopimelic acid (SDAP), forming succinate and LL-2,6-diaminopimelate (DAP), an intermediate involved in the bacterial biosynthesis of lysine and meso-diaminopimelic acid, an essential component of bacterial cell walls. This is Succinyl-diaminopimelate desuccinylase from Xanthobacter autotrophicus (strain ATCC BAA-1158 / Py2).